The primary structure comprises 1728 residues: Nebulin-related-anchoring protein (1728 aa).

The 61-residue stretch at 4-64 (QACSRCGYGV…HAHNPKNNTF (61 aa)) folds into the LIM zinc-binding domain. Nebulin repeat units lie at residues 173-200 (TPAY…ERVS), 201-235 (TFTP…QQRG), 244-271 (TPAY…REMK), 313-340 (TPAY…KMKG), 345-379 (HSLA…NSKG), 386-414 (ETPQ…TQLR), 416-450 (HYDG…HDVV), 484-518 (KFSS…RNKL), 519-553 (NYTL…KTKG), 555-589 (GFEM…KMKG), 599-623 (LLHS…ESKT), 624-658 (HFNL…DYTV), 659-689 (LPED…WMRG), 699-721 (NLEQ…RVDE), 723-757 (KFTS…QSVH), 758-792 (QYTI…KQKA), 794-828 (GFEL…RSRG), 841-866 (QMSH…DTRS), 867-893 (QCHI…VGYR), 898-932 (CFTA…WMKG), 943-960 (VEQA…KYRQ), 966-1000 (KFTS…NVKH), 1001-1035 (HYTQ…RLRD), 1037-1071 (GYKL…RMKG), 1075-1109 (GSRS…HAKA), 1110-1136 (HFHL…QDYR), 1141-1175 (QHTV…FMRG), 1180-1203 (VPGT…KYRQ), 1209-1243 (KYTA…DARH), 1244-1278 (QYTM…NLRA), 1280-1314 (GYKL…KERG), 1318-1352 (GVRN…SSQA), 1353-1379 (QCHL…HDYR), 1384-1418 (EFTA…GMKG), 1425-1446 (QSPQ…KYRK), 1452-1478 (KFTT…RLYR), 1487-1521 (RYTP…QSRA), 1523-1557 (GYDF…RDRG), 1561-1595 (GYRS…KGRS), 1596-1630 (QFHS…QHTS), and 1637-1661 (LKHA…LTRG). Threonine 203 carries the post-translational modification Phosphothreonine. Position 1078 is a phosphoserine (serine 1078).

As to quaternary structure, interacts with actin, alpha-actinin, KLHL41, TLN1 and VCL. Interacts with CSRP3. In terms of tissue distribution, expressed in cardiac and skeletal muscle. Not detected in kidney, spleen, liver, brain, lung, stomach or uterus.

May be involved in anchoring the terminal actin filaments in the myofibril to the membrane and in transmitting tension from the myofibrils to the extracellular matrix. The polypeptide is Nebulin-related-anchoring protein (Mus musculus (Mouse)).